The primary structure comprises 174 residues: Crossover junction endodeoxyribonuclease RuvC (174 aa).

Catalysis depends on residues Asp-8, Glu-69, and Asp-141. 3 residues coordinate Mg(2+): Asp-8, Glu-69, and Asp-141.

This sequence belongs to the RuvC family. As to quaternary structure, homodimer which binds Holliday junction (HJ) DNA. The HJ becomes 2-fold symmetrical on binding to RuvC with unstacked arms; it has a different conformation from HJ DNA in complex with RuvA. In the full resolvosome a probable DNA-RuvA(4)-RuvB(12)-RuvC(2) complex forms which resolves the HJ. Mg(2+) serves as cofactor.

The protein localises to the cytoplasm. The catalysed reaction is Endonucleolytic cleavage at a junction such as a reciprocal single-stranded crossover between two homologous DNA duplexes (Holliday junction).. In terms of biological role, the RuvA-RuvB-RuvC complex processes Holliday junction (HJ) DNA during genetic recombination and DNA repair. Endonuclease that resolves HJ intermediates. Cleaves cruciform DNA by making single-stranded nicks across the HJ at symmetrical positions within the homologous arms, yielding a 5'-phosphate and a 3'-hydroxyl group; requires a central core of homology in the junction. The consensus cleavage sequence is 5'-(A/T)TT(C/G)-3'. Cleavage occurs on the 3'-side of the TT dinucleotide at the point of strand exchange. HJ branch migration catalyzed by RuvA-RuvB allows RuvC to scan DNA until it finds its consensus sequence, where it cleaves and resolves the cruciform DNA. In Xanthomonas oryzae pv. oryzae (strain MAFF 311018), this protein is Crossover junction endodeoxyribonuclease RuvC.